The sequence spans 414 residues: Probable 26S proteasome regulatory subunit 6B (414 aa).

202-209 contacts ATP; it reads GPPGCGKT.

The protein belongs to the AAA ATPase family.

It localises to the cytoplasm. The protein localises to the nucleus. The 26S proteasome is involved in the ATP-dependent degradation of ubiquitinated proteins. The regulatory (or ATPase) complex confers ATP dependency and substrate specificity to the 26S complex. In Caenorhabditis elegans, this protein is Probable 26S proteasome regulatory subunit 6B (rpt-3).